The primary structure comprises 372 residues: Flagellar P-ring protein (372 aa).

Residues 1–26 form the signal peptide; sequence MNLSSLPFRLLAAAVALCAIAAPASA.

This sequence belongs to the FlgI family. In terms of assembly, the basal body constitutes a major portion of the flagellar organelle and consists of four rings (L,P,S, and M) mounted on a central rod.

It localises to the periplasm. It is found in the bacterial flagellum basal body. Functionally, assembles around the rod to form the L-ring and probably protects the motor/basal body from shearing forces during rotation. The sequence is that of Flagellar P-ring protein from Xanthomonas axonopodis pv. citri (strain 306).